The following is a 288-amino-acid chain: L-xylulose reductase (288 aa).

The NADP(+) site is built by Ile39, Asn113, and Lys147. Ser181 acts as the Proton donor in catalysis. The NADP(+) site is built by Tyr196, Lys200, Ile228, and Thr230. Tyr196 (proton acceptor) is an active-site residue. Residue Lys200 is the Lowers pKa of active site Tyr of the active site.

This sequence belongs to the short-chain dehydrogenases/reductases (SDR) family.

The enzyme catalyses xylitol + NADP(+) = L-xylulose + NADPH + H(+). It functions in the pathway carbohydrate degradation; L-arabinose degradation via L-arabinitol; D-xylulose 5-phosphate from L-arabinose (fungal route): step 3/5. Functionally, L-xylulose reductase involved in the catabolism of L-arabinose through an oxidoreductive pathway. Catalyzes the NADPH-dependent reduction of L-xylulose. Is also able to convert D-xylulose, D-ribulose, L-sorbose, and D-fructose to their corresponding polyols. This chain is L-xylulose reductase, found in Hypocrea jecorina (strain QM6a) (Trichoderma reesei).